Reading from the N-terminus, the 280-residue chain is 23S rRNA (guanine(748)-N(1))-methyltransferase (280 aa).

Zn(2+)-binding residues include cysteine 11, cysteine 14, cysteine 27, and histidine 31. S-adenosyl-L-methionine-binding positions include tyrosine 70, 100-101 (TG), and histidine 188.

The protein belongs to the methyltransferase superfamily. RlmA family.

It carries out the reaction guanosine(748) in 23S rRNA + S-adenosyl-L-methionine = N(1)-methylguanosine(748) in 23S rRNA + S-adenosyl-L-homocysteine + H(+). Functionally, specifically methylates the guanosine in position 748 of 23S rRNA. Confers resistance to the macrolide antibiotic tylosine. This Streptomyces fradiae (Streptomyces roseoflavus) protein is 23S rRNA (guanine(748)-N(1))-methyltransferase (rlmAII).